A 97-amino-acid chain; its full sequence is uncharacterized protein (97 aa).

The span at 1–20 (MAKEQTDRTTLDLFAHERRP) shows a compositional bias: basic and acidic residues. The disordered stretch occupies residues 1–30 (MAKEQTDRTTLDLFAHERRPGRPKTNPLSR).

This is an uncharacterized protein from Escherichia coli O157:H7.